Here is a 536-residue protein sequence, read N- to C-terminus: Phosphoenolpyruvate carboxykinase (ATP) (536 aa).

Positions 61, 195, and 201 each coordinate substrate. ATP contacts are provided by residues lysine 201, histidine 220, and 236–244; that span reads GLSGTGKTT. Mn(2+) contacts are provided by lysine 201 and histidine 220. Position 257 (aspartate 257) interacts with Mn(2+). 3 residues coordinate ATP: glutamate 285, arginine 322, and threonine 447. A substrate-binding site is contributed by arginine 322.

It belongs to the phosphoenolpyruvate carboxykinase (ATP) family. Mn(2+) serves as cofactor.

It localises to the cytoplasm. It catalyses the reaction oxaloacetate + ATP = phosphoenolpyruvate + ADP + CO2. It participates in carbohydrate biosynthesis; gluconeogenesis. Involved in the gluconeogenesis. Catalyzes the conversion of oxaloacetate (OAA) to phosphoenolpyruvate (PEP) through direct phosphoryl transfer between the nucleoside triphosphate and OAA. In Brucella anthropi (strain ATCC 49188 / DSM 6882 / CCUG 24695 / JCM 21032 / LMG 3331 / NBRC 15819 / NCTC 12168 / Alc 37) (Ochrobactrum anthropi), this protein is Phosphoenolpyruvate carboxykinase (ATP).